A 2211-amino-acid polypeptide reads, in one-letter code: Norsolorinic acid synthase stcA (2211 aa).

The tract at residues phenylalanine 11 to histidine 251 is starter unit:ACP transacylase (SAT) domain. Residues proline 358–serine 378 are disordered. A compositionally biased stretch (basic and acidic residues) spans threonine 368–serine 378. The region spanning arginine 380–aspartate 812 is the Ketosynthase family 3 (KS3) domain. Catalysis depends on for beta-ketoacyl synthase activity residues cysteine 552, histidine 687, and histidine 730. The tract at residues isoleucine 912–aspartate 1201 is malonyl-CoA:ACP transacylase (MAT) domain. Serine 1004 serves as the catalytic For acyl/malonyl transferase activity. The disordered stretch occupies residues threonine 1289 to alanine 1316. Residues histidine 1327–glutamine 1468 form an N-terminal hotdog fold region. In terms of domain architecture, PKS/mFAS DH spans histidine 1327–arginine 1643. The segment at threonine 1340–arginine 1643 is product template (PT) domain. Histidine 1359 functions as the Proton acceptor; for dehydratase activity in the catalytic mechanism. The segment at phenylalanine 1495–arginine 1643 is C-terminal hotdog fold. The active-site Proton donor; for dehydratase activity is the aspartate 1555. Residues arginine 1655 to alanine 1706 are disordered. Polar residues-rich tracts occupy residues glycine 1658–proline 1668 and lysine 1676–histidine 1685. Carrier domains are found at residues arginine 1712 to alanine 1791 and aspartate 1839 to serine 1915. Serine 1749 and serine 1873 each carry O-(pantetheine 4'-phosphoryl)serine. Residues glycine 1912 to serine 1926 are compositionally biased toward low complexity. Residues glycine 1912 to arginine 1947 form a disordered region. A compositionally biased stretch (polar residues) spans isoleucine 1934–aspartate 1945. The thioesterase/Claisen cyclase (TE/CLC) domain stretch occupies residues isoleucine 1969–leucine 2205. The For thioesterase activity role is filled by serine 2039.

It depends on pantetheine 4'-phosphate as a cofactor.

The enzyme catalyses hexanoyl-[ACP] + 7 malonyl-CoA + 6 H(+) = noranthrone + holo-[ACP] + 7 CO2 + 7 CoA + 2 H2O. The protein operates within mycotoxin biosynthesis; sterigmatocystin biosynthesis. In terms of biological role, non-reducing polyketide synthase; part of the gene cluster that mediates the biosynthesis of sterigmatocystin (ST), a polyketide-derived furanocoumarin which is part of the most toxic and carcinogenic compounds among the known mycotoxins. The first step in the biosynthesis of sterigmatocystin is the production of hexanoate by the fatty acid synthase (FAS) units stcJ and stcK. The polyketide backbone is assembled by the non-reducing polyketide synthase stcA by condensation of the starter hexanoyl-CoA and 7 malonyl-CoA extender units followed by cyclization and release of norsolorinic acid. Norsolorinic acid is the first stable intermediate in the biosynthesis of sterigmatocystin and is converted into averantin (AVN) by the ketoreductase stcE which reduces the hexanoate ketone to an alcohol. Averantin is then oxidized into 5'-hydroxyaverantin (HAVN) by the cytochrome P450 monooxygenase stcF. 5'-hydroxyaverantin is further converted to 5'-oxyaverantin (OAVN) by the 5'-hydroxyaverantin dehydrogenase stcG. The next step is the conversion of OAVN into averufin (AVF) which is catalyzed by a yet to be identified enzyme. The cytochrome P450 monooxygenase stcB and the flavin-binding monooxygenase stcW are both required for the conversion of averufin to 1-hydroxyversicolorone. The esterase stcI probably catalyzes the formation of versiconal hemiacetal acetate from 1-hydroxyversicolorone. The oxydoreductase stcN then probably catalyzes the biosynthetic step from versiconal to versicolorin B (VERB). The next step is performed by the versicolorin B desaturase stcL to produce versicolorin A (VERA). The ketoreductase stcU and the cytochrome P450 monooxygenase stcS are involved in the conversion of versicolorin A to demethylsterigmatocystin. The Baeyer-Villiger oxidas stcQ and the reductase stcR might be involved in the biosynthetic step from versicolorin A to demethylsterigmatocystin. The final step in the biosynthesis of sterigmatocystin is the methylation of demethylsterigmatocystin catalyzed by the methyltransferase stcP. This is Norsolorinic acid synthase stcA from Emericella nidulans (strain FGSC A4 / ATCC 38163 / CBS 112.46 / NRRL 194 / M139) (Aspergillus nidulans).